A 737-amino-acid polypeptide reads, in one-letter code: Disintegrin and metalloproteinase domain-containing protein 2 (737 aa).

Residues 1–18 (MWLLLLLLSGLSRLGGLS) form the signal peptide. Residues 19–180 (EPQTEGTREK…YKIRSIKPQR (162 aa)) constitute a propeptide that is removed on maturation. Topologically, residues 19–688 (EPQTEGTREK…ASAYRSKSAR (670 aa)) are extracellular. N-linked (GlcNAc...) asparagine glycosylation is found at Asn128 and Asn226. One can recognise a Peptidase M12B domain in the interval 184 to 381 (HYLEIHIVVE…QSSHCLQNQP (198 aa)). Disulfide bonds link Cys293–Cys376, Cys335–Cys360, Cys337–Cys342, and Cys450–Cys470. Residues Asn359, Asn464, Asn491, and Asn571 are each glycosylated (N-linked (GlcNAc...) asparagine). Residues 389–478 (MAVCGNGELE…VCEEDFFVQD (90 aa)) form the Disintegrin domain. The region spanning 617–650 (LNYDCTPEKCNHHGVCNNKKHCHCEPTYLPPDCK) is the EGF-like domain. 3 disulfides stabilise this stretch: Cys621–Cys632, Cys626–Cys638, and Cys640–Cys649. Residues 689–709 (WPFFLIIPFYVVILVLIGMLV) traverse the membrane as a helical segment. At 710–737 (KVYSQRKKWRMDDFSSEEQFESESESKD) the chain is on the cytoplasmic side. Ser731 carries the post-translational modification Phosphoserine.

As to quaternary structure, heterodimer with ADAM1/fertilin subunit alpha. In terms of processing, the prodomain and the metalloprotease domain are cleaved during the epididymal maturation of the spermatozoa.

The protein localises to the membrane. In terms of biological role, sperm surface membrane protein that may be involved in sperm-egg plasma membrane adhesion and fusion during fertilization. Could have a direct role in sperm-zona binding or migration of sperm from the uterus into the oviduct. Interactions with egg membrane could be mediated via binding between its disintegrin-like domain to one or more integrins receptors on the egg. This is a non catalytic metalloprotease-like protein. The sequence is that of Disintegrin and metalloproteinase domain-containing protein 2 (Adam2) from Rattus norvegicus (Rat).